Consider the following 355-residue polypeptide: Elongation factor Ts (355 aa).

An involved in Mg(2+) ion dislocation from EF-Tu region spans residues 82-85; the sequence is TDFV.

It belongs to the EF-Ts family.

Its subcellular location is the cytoplasm. Functionally, associates with the EF-Tu.GDP complex and induces the exchange of GDP to GTP. It remains bound to the aminoacyl-tRNA.EF-Tu.GTP complex up to the GTP hydrolysis stage on the ribosome. The protein is Elongation factor Ts of Helicobacter pylori (strain P12).